Here is a 339-residue protein sequence, read N- to C-terminus: Heat-inducible transcription repressor HrcA (339 aa).

It belongs to the HrcA family.

Negative regulator of class I heat shock genes (grpE-dnaK-dnaJ and groELS operons). Prevents heat-shock induction of these operons. The protein is Heat-inducible transcription repressor HrcA of Clostridioides difficile (strain 630) (Peptoclostridium difficile).